A 94-amino-acid polypeptide reads, in one-letter code: Defensin alpha 5 (94 aa).

Positions 1–19 (MRTIAILAAILLVALQAQA) are cleaved as a signal peptide. 3 disulfide bridges follow: Cys65/Cys93, Cys67/Cys82, and Cys72/Cys92.

This sequence belongs to the alpha-defensin family. In terms of assembly, homodimer. Homotetramer. Interacts with B.antracis lef/lethal factor. Glycosylated. Post-translationally, proteolytically cleaved at Arg-62 by trypsin. Both the propeptide form proHD5/HD5(20-94) and HD5(56-94) are cleaved into the lumenal peptide form HD5(63-94) by trypsin. Unprocessed proHD5 exerts antimicrobial activities, but peptide potency is enhanced by peptide processing. Proteolytically cleaved in duodenal fluid; derived fragments are antimicrobially active against commensal bacteria (in vitro). In terms of processing, (Microbial infection) The disulfide bridges and homodimerization are a prerequisite for the enhancement of S.flexneri adhesion and invasion. As to expression, expressed in the gastrointestinal, reproductive, and urinary tracts (at protein level). Expressed in Paneth cells of the small intestine (at protein level). Expressed throughout the urothelium of the lower urinary tract and in the collecting tubules of the kidney (at protein level). Expressed in stratified squamous epithelial cells of the female genital tract epithelia, such as in vagina, ectocervix, endocervix, endometrium, and fallopian tube (at protein level). Endometrial expression correlates with stages of the menstrual cycle: Expression is low during the early proliferative phase, increased during the mid- to late proliferative phase, peaks during the early secretory phase of the cycle, and decreases during the mid- to late secretory phase.

The protein localises to the secreted. It localises to the cytoplasmic vesicle. It is found in the secretory vesicle. In terms of biological role, host-defense peptide that maintains sterility in the urogenital system. Has antimicrobial activity against a wide range of bacteria, including Gram-negative E.coli, P.aeruginosa and S.typhimurium, and Gram-positive E.aerogenes, S.aureus, B.cereus, E.faecium and L.monocytogenes. Confers resistance to intestinal infection by S.typhimurium. Exhibits antimicrobial activity against enteric commensal bacteria such as B.adolescentis, L.acidophilus, B.breve, L.fermentum, B.longum and S.thermophilus. Binds to bacterial membranes and causes membrane disintegration. Induces the secretion of the chemokine IL-8 by intestinal epithelial cells. Binds to B.antracis lef/lethal factor, a major virulence factor from B.anthracis, and neutralizes its enzymatic activity. Its function is as follows. (Microbial infection) Acts as a target for S.flexneri infection by binding to the bacterium, possibly via bacterial surface proteins, and thereby augmenting infectivity via enhanced bacterial adhesion and invasion of epithelial cells and tissues. The polypeptide is Defensin alpha 5 (DEFA5) (Homo sapiens (Human)).